The primary structure comprises 206 residues: Glycerol-3-phosphate acyltransferase (206 aa).

Helical transmembrane passes span 6-26, 57-77, 86-106, 118-138, 143-163, and 165-185; these read IFLAFLCIGVSYSLGSFPSGF, KAALIVFLIDVSKGIGSILIA, FHVICGIAALSGHIWPIWLNW, VFLGISWQVGLASLGIFMAVL, IVSLSSISAAISLPILMFLSL, and EASFLNAYIIASFAAMIMVLW.

It belongs to the PlsY family. In terms of assembly, probably interacts with PlsX.

It localises to the cell inner membrane. It carries out the reaction an acyl phosphate + sn-glycerol 3-phosphate = a 1-acyl-sn-glycero-3-phosphate + phosphate. Its pathway is lipid metabolism; phospholipid metabolism. Catalyzes the transfer of an acyl group from acyl-phosphate (acyl-PO(4)) to glycerol-3-phosphate (G3P) to form lysophosphatidic acid (LPA). This enzyme utilizes acyl-phosphate as fatty acyl donor, but not acyl-CoA or acyl-ACP. This chain is Glycerol-3-phosphate acyltransferase, found in Prochlorococcus marinus (strain MIT 9211).